The following is a 350-amino-acid chain: Phenylalanine--tRNA ligase alpha subunit (350 aa).

Glu-271 serves as a coordination point for Mg(2+).

Belongs to the class-II aminoacyl-tRNA synthetase family. Phe-tRNA synthetase alpha subunit type 1 subfamily. Tetramer of two alpha and two beta subunits. Mg(2+) is required as a cofactor.

It is found in the cytoplasm. It carries out the reaction tRNA(Phe) + L-phenylalanine + ATP = L-phenylalanyl-tRNA(Phe) + AMP + diphosphate + H(+). This chain is Phenylalanine--tRNA ligase alpha subunit, found in Delftia acidovorans (strain DSM 14801 / SPH-1).